The sequence spans 246 residues: Probable transcriptional regulatory protein WP1214 (246 aa).

A disordered region spans residues 1–22; that stretch reads MAGHSQFSNIKHRKGAQDAKRS.

It belongs to the TACO1 family.

The protein resides in the cytoplasm. In Wolbachia pipientis subsp. Culex pipiens (strain wPip), this protein is Probable transcriptional regulatory protein WP1214.